Consider the following 309-residue polypeptide: 2-dehydro-3-deoxygluconokinase (309 aa).

Substrate is bound by residues 28–32 (GDTLN), Tyr-88, 102–104 (YWR), and Arg-170. Residues 168 to 170 (NYR), 228 to 233 (KRGADS), and 261 to 264 (AAGD) contribute to the ATP site. A substrate-binding site is contributed by Asp-264. The active-site Proton acceptor is the Asp-264.

Belongs to the carbohydrate kinase pfkB family.

The catalysed reaction is 2-dehydro-3-deoxy-D-gluconate + ATP = 2-dehydro-3-deoxy-6-phospho-D-gluconate + ADP + H(+). The protein operates within carbohydrate acid metabolism; 2-dehydro-3-deoxy-D-gluconate degradation; D-glyceraldehyde 3-phosphate and pyruvate from 2-dehydro-3-deoxy-D-gluconate: step 1/2. Its function is as follows. Catalyzes the phosphorylation of 2-keto-3-deoxygluconate (KDG) to produce 2-keto-3-deoxy-6-phosphogluconate (KDPG). The chain is 2-dehydro-3-deoxygluconokinase (kdgK) from Escherichia coli (strain ATCC 9637 / CCM 2024 / DSM 1116 / LMG 11080 / NBRC 13500 / NCIMB 8666 / NRRL B-766 / W).